Consider the following 269-residue polypeptide: MSRLEQRFAELKAEGRSALVTFVTAGDPGYDASLQILKGLPAAGADVIELGMPFTDPMADGVAIQLATLRALEAGQTLAKTLQMVREFRVDNQTTPIVLMGYYNPIHRFGVEPFVAEAKAAGVDGLIIVDLPPEHDAELATPAQAAGIDFIRLTTPTTDDARLPRVLERSSGFVYYVSVAGVTGAGSATTEHVTEAIARLRRHTDLPISVGFGIRTPEQAANIARLADGVVVGSALVDKIAQAKSADQAVNDVLSLCSALAEGVRGARR.

Active-site proton acceptor residues include Glu-49 and Asp-60.

Belongs to the TrpA family. In terms of assembly, tetramer of two alpha and two beta chains.

The enzyme catalyses (1S,2R)-1-C-(indol-3-yl)glycerol 3-phosphate + L-serine = D-glyceraldehyde 3-phosphate + L-tryptophan + H2O. The protein operates within amino-acid biosynthesis; L-tryptophan biosynthesis; L-tryptophan from chorismate: step 5/5. Its function is as follows. The alpha subunit is responsible for the aldol cleavage of indoleglycerol phosphate to indole and glyceraldehyde 3-phosphate. The polypeptide is Tryptophan synthase alpha chain (Pseudomonas putida (strain GB-1)).